A 1217-amino-acid polypeptide reads, in one-letter code: Myosin-5 (1217 aa).

The segment covering 1 to 11 has biased composition (basic residues); the sequence is MAILKRGARNK. Residues 1 to 24 are disordered; it reads MAILKRGARNKTHQEPAKRGGNNI. Residues 37-716 form the Myosin motor domain; sequence VGVSDLTLLT…TLFALENMRD (680 aa). ATP is bound at residue 130-137; that stretch reads GESGAGKT. The residue at position 358 (serine 358) is a Phosphoserine. Residues 405-487 are actin-binding; it reads SIGILDIYGF…PGIFAAMNDS (83 aa). 2 IQ domains span residues 720–740 and 741–766; these read HNMA…RIDA and AVKI…YGTS. A TH1 domain is found at 772–962; the sequence is KERRSMSLLG…TIFVRRGNPA (191 aa). 3 disordered regions span residues 956–1102, 1145–1174, and 1197–1217; these read VRRG…NPSE, GAKA…AQTV, and NKMR…DDDW. The segment covering 965–974 has biased composition (basic residues); it reads KSKKKPRKKS. A compositionally biased stretch (polar residues) spans 976–987; the sequence is GMSAPTTQSSKT. The span at 994-1007 shows a compositional bias: low complexity; the sequence is SSNNQNTTVSQSLN. Residues 1025 to 1038 show a composition bias toward pro residues; that stretch reads PAPPPPGSKKPAPQ. The segment covering 1050–1071 has biased composition (low complexity); it reads PQAQMQTQTQIPASQSSATQSS. The span at 1072–1081 shows a compositional bias: pro residues; it reads IPPPPPPPPS. The 63-residue stretch at 1083–1145 folds into the SH3 domain; the sequence is TSEPQFEAAY…PTAYMVKHEG (63 aa). A compositionally biased stretch (polar residues) spans 1162 to 1174; the sequence is IQNQSQPASAQTV. Residues 1203 to 1217 are compositionally biased toward acidic residues; it reads SDEEAAASSDNDDDW.

It belongs to the TRAFAC class myosin-kinesin ATPase superfamily. Myosin family. Phosphorylation of the TEDS site (Ser-358) is required for the polarization of the actin cytoskeleton. Phosphorylation probably activates the myosin-I ATPase activity.

It localises to the cytoplasm. The protein localises to the cytoskeleton. The protein resides in the actin patch. Functionally, type-I myosin implicated in the organization of the actin cytoskeleton. Required for proper actin cytoskeleton polarization. At the cell cortex, assembles in patch-like structures together with proteins from the actin-polymerizing machinery and promotes actin assembly. Functions as actin nucleation-promoting factor (NPF) for the Arp2/3 complex. The chain is Myosin-5 (MYO5) from Candida glabrata (strain ATCC 2001 / BCRC 20586 / JCM 3761 / NBRC 0622 / NRRL Y-65 / CBS 138) (Yeast).